Consider the following 154-residue polypeptide: Large ribosomal subunit protein uL30 (154 aa).

The protein belongs to the universal ribosomal protein uL30 family. Part of the 50S ribosomal subunit.

This is Large ribosomal subunit protein uL30 from Methanococcus vannielii.